Consider the following 311-residue polypeptide: tRNA dimethylallyltransferase (311 aa).

Residue 16–23 (GPTASGKS) coordinates ATP. Residue 18 to 23 (TASGKS) participates in substrate binding. The segment at 41–44 (DSMQ) is interaction with substrate tRNA.

Belongs to the IPP transferase family. Monomer. Mg(2+) is required as a cofactor.

The catalysed reaction is adenosine(37) in tRNA + dimethylallyl diphosphate = N(6)-dimethylallyladenosine(37) in tRNA + diphosphate. Catalyzes the transfer of a dimethylallyl group onto the adenine at position 37 in tRNAs that read codons beginning with uridine, leading to the formation of N6-(dimethylallyl)adenosine (i(6)A). The chain is tRNA dimethylallyltransferase from Geobacter sulfurreducens (strain ATCC 51573 / DSM 12127 / PCA).